A 102-amino-acid polypeptide reads, in one-letter code: Small ribosomal subunit protein uS10 (102 aa).

Belongs to the universal ribosomal protein uS10 family. As to quaternary structure, part of the 30S ribosomal subunit.

Functionally, involved in the binding of tRNA to the ribosomes. The sequence is that of Small ribosomal subunit protein uS10 from Bifidobacterium longum (strain DJO10A).